Reading from the N-terminus, the 584-residue chain is Arginine--tRNA ligase (584 aa).

A 'HIGH' region motif is present at residues 129 to 139 (ANPTGPLHVGH).

This sequence belongs to the class-I aminoacyl-tRNA synthetase family. As to quaternary structure, monomer.

The protein resides in the cytoplasm. It catalyses the reaction tRNA(Arg) + L-arginine + ATP = L-arginyl-tRNA(Arg) + AMP + diphosphate. This Halorhodospira halophila (strain DSM 244 / SL1) (Ectothiorhodospira halophila (strain DSM 244 / SL1)) protein is Arginine--tRNA ligase.